We begin with the raw amino-acid sequence, 726 residues long: Penicillin-binding protein 1A (726 aa).

The Cytoplasmic portion of the chain corresponds to 1–3; sequence MKK. The helical; Signal-anchor for type II membrane protein transmembrane segment at 4 to 24 threads the bilayer; that stretch reads LVIGILGIVIALFVGLLVFLI. Topologically, residues 25–726 are periplasmic; the sequence is PIYKNLPDPK…SDLNAILGLR (702 aa). The segment at 45 to 213 is transglycosylase; sequence SEVYDAKGRL…AKYNPFYHPE (169 aa). The Proton donor; for transglycosylase activity role is filled by glutamate 83. The tract at residues 379-662 is transpeptidase; that stretch reads KYLGGNRAEI…SRVALPIWID (284 aa). Serine 432 serves as the catalytic Acyl-ester intermediate; for transpeptidase activity.

In the N-terminal section; belongs to the glycosyltransferase 51 family. The protein in the C-terminal section; belongs to the transpeptidase family.

The protein resides in the cell inner membrane. The catalysed reaction is [GlcNAc-(1-&gt;4)-Mur2Ac(oyl-L-Ala-gamma-D-Glu-L-Lys-D-Ala-D-Ala)](n)-di-trans,octa-cis-undecaprenyl diphosphate + beta-D-GlcNAc-(1-&gt;4)-Mur2Ac(oyl-L-Ala-gamma-D-Glu-L-Lys-D-Ala-D-Ala)-di-trans,octa-cis-undecaprenyl diphosphate = [GlcNAc-(1-&gt;4)-Mur2Ac(oyl-L-Ala-gamma-D-Glu-L-Lys-D-Ala-D-Ala)](n+1)-di-trans,octa-cis-undecaprenyl diphosphate + di-trans,octa-cis-undecaprenyl diphosphate + H(+). It catalyses the reaction Preferential cleavage: (Ac)2-L-Lys-D-Ala-|-D-Ala. Also transpeptidation of peptidyl-alanyl moieties that are N-acyl substituents of D-alanine.. The protein operates within cell wall biogenesis; peptidoglycan biosynthesis. The polypeptide is Penicillin-binding protein 1A (mrcA) (Aquifex aeolicus (strain VF5)).